Reading from the N-terminus, the 522-residue chain is Protein tweety homolog 3 (522 aa).

Topologically, residues Met-1–Ser-43 are extracellular. The chain crosses the membrane as a helical span at residues Leu-44–Phe-64. Over Tyr-65 to Thr-87 the chain is Cytoplasmic. The helical transmembrane segment at Val-88–Gly-108 threads the bilayer. Over Asn-109 to Leu-211 the chain is Extracellular. Glu-111 and Asp-114 together coordinate Ca(2+). N-linked (GlcNAc...) asparagine glycans are attached at residues Asn-127 and Asn-145. A helical transmembrane segment spans residues Gly-212 to Ile-232. Over Arg-233 to Thr-238 the chain is Cytoplasmic. Residues Leu-239–Leu-259 traverse the membrane as a helical segment. The Extracellular portion of the chain corresponds to Glu-260 to Glu-386. 2 disulfide bridges follow: Cys-271–Cys-381 and Cys-299–Cys-366. An N-linked (GlcNAc...) asparagine glycan is attached at Asn-351. The chain crosses the membrane as a helical span at residues Gly-387–Cys-407. Residues Ser-408–His-522 lie on the Cytoplasmic side of the membrane. The interval Gln-483 to His-522 is disordered.

This sequence belongs to the tweety family. In terms of assembly, homotetramer; disulfide-linked. Forms cis-homodimers in the presence of Ca(2+).

The protein resides in the cell membrane. It carries out the reaction chloride(in) = chloride(out). It catalyses the reaction L-glutamate(out) = L-glutamate(in). In terms of biological role, may act as a calcium-independent, swelling-dependent volume-regulated anion channel (VRAC-swell) which plays a pivotal role in the process of regulatory volume decrease (RVD) in the brain through the efflux of anions like chloride and organic osmolytes like glutamate. Probable large-conductance Ca(2+)-activated chloride channel. The sequence is that of Protein tweety homolog 3 (ttyh3) from Xenopus laevis (African clawed frog).